The sequence spans 155 residues: Small ribosomal subunit protein uS7cz/uS7cy (155 aa).

It belongs to the universal ribosomal protein uS7 family. In terms of assembly, part of the 30S ribosomal subunit.

It is found in the plastid. Its subcellular location is the chloroplast. Functionally, one of the primary rRNA binding proteins, it binds directly to 16S rRNA where it nucleates assembly of the head domain of the 30S subunit. In Acorus calamus var. americanus (American sweet flag), this protein is Small ribosomal subunit protein uS7cz/uS7cy (rps7-A).